The chain runs to 226 residues: Glutathione peroxidase 3 (226 aa).

The N-terminal stretch at 1–24 (MARLFRASCLLSLLLAGFIPPSQG) is a signal peptide. The active site involves Sec-73. Residue Sec-73 is a non-standard amino acid, selenocysteine.

It belongs to the glutathione peroxidase family. Homotetramer. In terms of tissue distribution, secreted in plasma.

It localises to the secreted. It catalyses the reaction 2 glutathione + H2O2 = glutathione disulfide + 2 H2O. The catalysed reaction is tert-butyl hydroperoxide + 2 glutathione = tert-butanol + glutathione disulfide + H2O. Its function is as follows. Protects cells and enzymes from oxidative damage, by catalyzing the reduction of hydrogen peroxide, lipid peroxides and organic hydroperoxide, by glutathione. The protein is Glutathione peroxidase 3 of Bos taurus (Bovine).